A 586-amino-acid chain; its full sequence is Potassium-transporting ATPase potassium-binding subunit (586 aa).

A run of 12 helical transmembrane segments spans residues 11–31 (LFLV…AKVF), 67–87 (AVAV…ILML), 136–156 (GLAV…IAVI), 179–199 (LYVL…QGVI), 279–299 (VEIF…GVMV), 306–326 (WAIL…LQGV), 351–371 (FGLA…CGAV), 381–401 (LGGM…GGVG), 403–423 (GLYT…LMIG), 442–462 (IITV…AMIT), 507–527 (ILGS…VLAM), and 551–571 (FALW…FPAL).

The protein belongs to the KdpA family. The system is composed of three essential subunits: KdpA, KdpB and KdpC.

It is found in the cell inner membrane. Its function is as follows. Part of the high-affinity ATP-driven potassium transport (or Kdp) system, which catalyzes the hydrolysis of ATP coupled with the electrogenic transport of potassium into the cytoplasm. This subunit binds the periplasmic potassium ions and delivers the ions to the membrane domain of KdpB through an intramembrane tunnel. The protein is Potassium-transporting ATPase potassium-binding subunit of Geobacter metallireducens (strain ATCC 53774 / DSM 7210 / GS-15).